A 1000-amino-acid polypeptide reads, in one-letter code: Bifunctional glutamine synthetase adenylyltransferase/adenylyl-removing enzyme (1000 aa).

Positions 1-481 (MTAPGRRSST…LHEKLFYRPL (481 aa)) are adenylyl removase. The interval 487–1000 (QLAPGEARLS…AVVDEQFYGA (514 aa)) is adenylyl transferase.

Belongs to the GlnE family. Requires Mg(2+) as cofactor.

The enzyme catalyses [glutamine synthetase]-O(4)-(5'-adenylyl)-L-tyrosine + phosphate = [glutamine synthetase]-L-tyrosine + ADP. The catalysed reaction is [glutamine synthetase]-L-tyrosine + ATP = [glutamine synthetase]-O(4)-(5'-adenylyl)-L-tyrosine + diphosphate. In terms of biological role, involved in the regulation of glutamine synthetase GlnA, a key enzyme in the process to assimilate ammonia. When cellular nitrogen levels are high, the C-terminal adenylyl transferase (AT) inactivates GlnA by covalent transfer of an adenylyl group from ATP to specific tyrosine residue of GlnA, thus reducing its activity. Conversely, when nitrogen levels are low, the N-terminal adenylyl removase (AR) activates GlnA by removing the adenylyl group by phosphorolysis, increasing its activity. The regulatory region of GlnE binds the signal transduction protein PII (GlnB) which indicates the nitrogen status of the cell. This chain is Bifunctional glutamine synthetase adenylyltransferase/adenylyl-removing enzyme, found in Streptomyces avermitilis (strain ATCC 31267 / DSM 46492 / JCM 5070 / NBRC 14893 / NCIMB 12804 / NRRL 8165 / MA-4680).